Consider the following 98-residue polypeptide: Large ribosomal subunit protein uL23 (98 aa).

Belongs to the universal ribosomal protein uL23 family. Part of the 50S ribosomal subunit. Contacts protein L29, and trigger factor when it is bound to the ribosome.

In terms of biological role, one of the early assembly proteins it binds 23S rRNA. One of the proteins that surrounds the polypeptide exit tunnel on the outside of the ribosome. Forms the main docking site for trigger factor binding to the ribosome. This Lactobacillus johnsonii (strain CNCM I-12250 / La1 / NCC 533) protein is Large ribosomal subunit protein uL23.